Consider the following 2151-residue polypeptide: Protein PRR14L (2151 aa).

Basic and acidic residues-rich tracts occupy residues 112-123 (KRSESMEPKVFR) and 134-154 (EPSE…EEKT). 3 disordered regions span residues 112-160 (KRSE…SQED), 206-225 (GTKT…KDLS), and 314-350 (QLHG…SDLS). S157 is modified (phosphoserine). Polar residues predominate over residues 322-350 (QPSSTHDSPTATSPLKENSEVSCFTSDLS). S582 and S945 each carry phosphoserine. The interval 974–1017 (SNQNRPDECKSEGQSAKEMLSSDQRETVTEPHGEVNHNQKDLLV) is disordered. Over residues 996–1013 (DQRETVTEPHGEVNHNQK) the composition is skewed to basic and acidic residues. Phosphoserine is present on S1029. Residues 1091–1103 (DSRSTLSRRELDA) are compositionally biased toward basic and acidic residues. 4 disordered regions span residues 1091-1115 (DSRS…DSDF), 1178-1226 (DSHY…SCHD), 1782-1802 (TGVH…PLQD), and 1986-2012 (AACP…KVSQ). A compositionally biased stretch (polar residues) spans 1178–1187 (DSHYGQQDKG). Residues 1188 to 1201 (TSLRETQEMTEGSR) are compositionally biased toward basic and acidic residues.

The polypeptide is Protein PRR14L (PRR14L) (Homo sapiens (Human)).